The chain runs to 195 residues: Large ribosomal subunit protein uL18 (195 aa).

The protein belongs to the universal ribosomal protein uL18 family. As to quaternary structure, part of the 50S ribosomal subunit. Contacts the 5S and 23S rRNAs.

In terms of biological role, this is one of the proteins that bind and probably mediate the attachment of the 5S RNA into the large ribosomal subunit, where it forms part of the central protuberance. The protein is Large ribosomal subunit protein uL18 of Methanocaldococcus jannaschii (strain ATCC 43067 / DSM 2661 / JAL-1 / JCM 10045 / NBRC 100440) (Methanococcus jannaschii).